We begin with the raw amino-acid sequence, 425 residues long: Sodium-dependent glucose transporter 1A (425 aa).

11 helical membrane-spanning segments follow: residues 35–55 (LIFV…GVLF), 61–81 (FFLL…IPFC), 84–104 (AVLL…VDTG), 123–143 (ALHF…KLAW), 183–203 (WAYA…FGLF), 228–248 (ALLC…ITYG), 271–291 (SIFW…ATFL), 294–314 (GTMI…LVLF), 320–340 (CLWI…PSGI), 355–375 (AFFV…IGIL), and 382–402 (LPVV…LFPV).

This sequence belongs to the major facilitator superfamily.

It is found in the apical cell membrane. May function as a sodium-dependent glucose transporter. Potential channels for urea in the inner medulla of kidney. The sequence is that of Sodium-dependent glucose transporter 1A from Mus musculus (Mouse).